A 492-amino-acid chain; its full sequence is 56 kDa U1 small nuclear ribonucleoprotein component (492 aa).

The span at 1–15 (MRPRRRGLAYHHTKP) shows a compositional bias: basic residues. Disordered stretches follow at residues 1–35 (MRPR…QRRK) and 300–371 (DQFP…NKPG). The segment covering 18–30 (QLSQGHYPTTSND) has biased composition (polar residues). Residues 310-321 (SNSPSSNSISSS) are compositionally biased toward low complexity. Positions 329 to 353 (TSYQTQPQRHAVNKPSNVLNSSNRH) are enriched in polar residues.

In terms of assembly, component of the 18S U1 snRNP particle, a subcomplex of the spliceosome. Interacts with the nuclear cap-binding complex CBC1-CBC2 (yCBC). Directly contacts intronic sequences of substrate pre-RNA.

Its subcellular location is the nucleus. Component of the U1 snRNP particle, which recognizes and binds the 5'-splice site of pre-mRNA. Together with other non-snRNP factors, U1 snRNP forms the spliceosomal commitment complex, that targets pre-mRNA to the splicing pathway. The polypeptide is 56 kDa U1 small nuclear ribonucleoprotein component (SNU56) (Saccharomyces cerevisiae (strain ATCC 204508 / S288c) (Baker's yeast)).